The following is a 180-amino-acid chain: Large ribosomal subunit protein uL6 (180 aa).

It belongs to the universal ribosomal protein uL6 family. As to quaternary structure, part of the 50S ribosomal subunit.

Functionally, this protein binds to the 23S rRNA, and is important in its secondary structure. It is located near the subunit interface in the base of the L7/L12 stalk, and near the tRNA binding site of the peptidyltransferase center. This chain is Large ribosomal subunit protein uL6, found in Thermodesulfovibrio yellowstonii (strain ATCC 51303 / DSM 11347 / YP87).